The following is a 341-amino-acid chain: L-threonine 3-dehydrogenase (341 aa).

C38 provides a ligand contact to Zn(2+). Catalysis depends on charge relay system residues T40 and H43. 6 residues coordinate Zn(2+): H63, E64, C93, C96, C99, and C107. Residues I175, D195, R200, 262-264, and 286-287 contribute to the NAD(+) site; these read LGI and IY.

This sequence belongs to the zinc-containing alcohol dehydrogenase family. As to quaternary structure, homotetramer. Requires Zn(2+) as cofactor.

The protein resides in the cytoplasm. It carries out the reaction L-threonine + NAD(+) = (2S)-2-amino-3-oxobutanoate + NADH + H(+). Its pathway is amino-acid degradation; L-threonine degradation via oxydo-reductase pathway; glycine from L-threonine: step 1/2. Catalyzes the NAD(+)-dependent oxidation of L-threonine to 2-amino-3-ketobutyrate. This Yersinia pestis bv. Antiqua (strain Antiqua) protein is L-threonine 3-dehydrogenase.